We begin with the raw amino-acid sequence, 551 residues long: Thermophilic beta-amylase (551 aa).

The N-terminal stretch at 1–32 is a signal peptide; that stretch reads MIGAFKRLGQKLFLTLLTASLIFASSIVTANA. Substrate is bound at residue D73. E80 is a binding site for Ca(2+). The substrate site is built by H113 and D121. Residue E167 coordinates Ca(2+). Catalysis depends on E195, which acts as the Proton donor. Residues K310, H315, and T353 each coordinate substrate. E392 serves as the catalytic Proton acceptor. Substrate-binding positions include 393–394 and R423; that span reads NA. Residues 448-551 enclose the CBM20 domain; it reads LTPNGTIPVT…TGSVTITWQN (104 aa).

It belongs to the glycosyl hydrolase 14 family. In terms of assembly, monomer. Ca(2+) is required as a cofactor.

It carries out the reaction Hydrolysis of (1-&gt;4)-alpha-D-glucosidic linkages in polysaccharides so as to remove successive maltose units from the non-reducing ends of the chains.. In Thermoanaerobacterium thermosulfurigenes (Clostridium thermosulfurogenes), this protein is Thermophilic beta-amylase.